A 145-amino-acid polypeptide reads, in one-letter code: 6-pyruvoyl tetrahydrobiopterin synthase (145 aa).

Position 19 is a phosphoserine (serine 19). Residue histidine 24 participates in Zn(2+) binding. Serine 28 carries the phosphoserine modification. Cysteine 43 serves as the catalytic Proton acceptor. Zn(2+) contacts are provided by histidine 49 and histidine 51. The Charge relay system role is filled by histidine 90. Tyrosine 128 bears the Phosphotyrosine mark. Glutamate 134 acts as the Charge relay system in catalysis.

The protein belongs to the PTPS family. In terms of assembly, homohexamer formed of two homotrimers in a head to head fashion. Requires Zn(2+) as cofactor. Post-translationally, phosphorylation of Ser-19 is required for maximal enzyme activity.

The enzyme catalyses 7,8-dihydroneopterin 3'-triphosphate = 6-pyruvoyl-5,6,7,8-tetrahydropterin + triphosphate + H(+). Its pathway is cofactor biosynthesis; tetrahydrobiopterin biosynthesis; tetrahydrobiopterin from 7,8-dihydroneopterin triphosphate: step 1/3. In terms of biological role, involved in the biosynthesis of tetrahydrobiopterin, an essential cofactor of aromatic amino acid hydroxylases. Catalyzes the transformation of 7,8-dihydroneopterin triphosphate into 6-pyruvoyl tetrahydropterin. The polypeptide is 6-pyruvoyl tetrahydrobiopterin synthase (PTS) (Pongo abelii (Sumatran orangutan)).